The following is a 469-amino-acid chain: Glutamine synthetase (469 aa).

The GS beta-grasp domain maps to 14–99 (NDVKFVDLRF…FCDILDPVSG (86 aa)). The region spanning 106 to 469 (PRGTAKKAEA…PVEFDMYYSV (364 aa)) is the GS catalytic domain. The Mg(2+) site is built by glutamate 131 and glutamate 133. Glutamate 209 serves as a coordination point for ATP. Positions 214 and 221 each coordinate Mg(2+). L-glutamate contacts are provided by residues 265 to 266 (NG) and glycine 266. Histidine 270 contacts Mg(2+). Residues 272-274 (HLS) and serine 274 each bind ATP. L-glutamate is bound by residues arginine 322, glutamate 328, and arginine 340. ATP is bound by residues arginine 340, arginine 345, and lysine 353. Mg(2+) is bound at residue glutamate 358. Arginine 360 provides a ligand contact to L-glutamate. An O-AMP-tyrosine modification is found at tyrosine 398.

The protein belongs to the glutamine synthetase family. In terms of assembly, oligomer of 12 subunits arranged in the form of two hexameric ring. It depends on Mg(2+) as a cofactor.

It localises to the cytoplasm. The catalysed reaction is L-glutamate + NH4(+) + ATP = L-glutamine + ADP + phosphate + H(+). The activity of this enzyme could be controlled by adenylation under conditions of abundant glutamine. Catalyzes the ATP-dependent biosynthesis of glutamine from glutamate and ammonia. The chain is Glutamine synthetase from Rhizobium meliloti (strain 1021) (Ensifer meliloti).